The following is a 37-amino-acid chain: Cytochrome b6-f complex subunit 5 (37 aa).

Residues 5–25 (SLFGIVLGLIPITLAGLFVTA) traverse the membrane as a helical segment.

Belongs to the PetG family. As to quaternary structure, the 4 large subunits of the cytochrome b6-f complex are cytochrome b6, subunit IV (17 kDa polypeptide, PetD), cytochrome f and the Rieske protein, while the 4 small subunits are PetG, PetL, PetM and PetN. The complex functions as a dimer.

It localises to the plastid. Its subcellular location is the chloroplast thylakoid membrane. Component of the cytochrome b6-f complex, which mediates electron transfer between photosystem II (PSII) and photosystem I (PSI), cyclic electron flow around PSI, and state transitions. PetG is required for either the stability or assembly of the cytochrome b6-f complex. The chain is Cytochrome b6-f complex subunit 5 from Arabis hirsuta (Hairy rock-cress).